A 341-amino-acid polypeptide reads, in one-letter code: Glyceraldehyde-3-phosphate dehydrogenase (341 aa).

Residues 11 to 12 (TI) and G110 contribute to the NAD(+) site. A D-glyceraldehyde 3-phosphate-binding site is contributed by 139 to 141 (SCN). The active-site Nucleophile is C140. NAD(+) is bound at residue R168. 194–195 (HG) is a D-glyceraldehyde 3-phosphate binding site. Residue Q302 participates in NAD(+) binding.

It belongs to the glyceraldehyde-3-phosphate dehydrogenase family. Homotetramer.

The protein resides in the cytoplasm. The enzyme catalyses D-glyceraldehyde 3-phosphate + phosphate + NADP(+) = (2R)-3-phospho-glyceroyl phosphate + NADPH + H(+). The catalysed reaction is D-glyceraldehyde 3-phosphate + phosphate + NAD(+) = (2R)-3-phospho-glyceroyl phosphate + NADH + H(+). It functions in the pathway carbohydrate degradation; glycolysis; pyruvate from D-glyceraldehyde 3-phosphate: step 1/5. This Methanoculleus marisnigri (strain ATCC 35101 / DSM 1498 / JR1) protein is Glyceraldehyde-3-phosphate dehydrogenase.